The sequence spans 160 residues: Cyanate hydratase (160 aa).

Catalysis depends on residues R100, E103, and S126.

Belongs to the cyanase family.

It carries out the reaction cyanate + hydrogencarbonate + 3 H(+) = NH4(+) + 2 CO2. Functionally, catalyzes the reaction of cyanate with bicarbonate to produce ammonia and carbon dioxide. This chain is Cyanate hydratase, found in Neosartorya fischeri (strain ATCC 1020 / DSM 3700 / CBS 544.65 / FGSC A1164 / JCM 1740 / NRRL 181 / WB 181) (Aspergillus fischerianus).